The following is a 99-amino-acid chain: Aspartyl/glutamyl-tRNA(Asn/Gln) amidotransferase subunit C (99 aa).

It belongs to the GatC family. As to quaternary structure, heterotrimer of A, B and C subunits.

The catalysed reaction is L-glutamyl-tRNA(Gln) + L-glutamine + ATP + H2O = L-glutaminyl-tRNA(Gln) + L-glutamate + ADP + phosphate + H(+). It carries out the reaction L-aspartyl-tRNA(Asn) + L-glutamine + ATP + H2O = L-asparaginyl-tRNA(Asn) + L-glutamate + ADP + phosphate + 2 H(+). In terms of biological role, allows the formation of correctly charged Asn-tRNA(Asn) or Gln-tRNA(Gln) through the transamidation of misacylated Asp-tRNA(Asn) or Glu-tRNA(Gln) in organisms which lack either or both of asparaginyl-tRNA or glutaminyl-tRNA synthetases. The reaction takes place in the presence of glutamine and ATP through an activated phospho-Asp-tRNA(Asn) or phospho-Glu-tRNA(Gln). This chain is Aspartyl/glutamyl-tRNA(Asn/Gln) amidotransferase subunit C, found in Macrococcus caseolyticus (strain JCSC5402) (Macrococcoides caseolyticum).